A 224-amino-acid chain; its full sequence is 2-C-methyl-D-erythritol 4-phosphate cytidylyltransferase (224 aa).

It belongs to the IspD/TarI cytidylyltransferase family. IspD subfamily.

It catalyses the reaction 2-C-methyl-D-erythritol 4-phosphate + CTP + H(+) = 4-CDP-2-C-methyl-D-erythritol + diphosphate. It participates in isoprenoid biosynthesis; isopentenyl diphosphate biosynthesis via DXP pathway; isopentenyl diphosphate from 1-deoxy-D-xylulose 5-phosphate: step 2/6. In terms of biological role, catalyzes the formation of 4-diphosphocytidyl-2-C-methyl-D-erythritol from CTP and 2-C-methyl-D-erythritol 4-phosphate (MEP). The polypeptide is 2-C-methyl-D-erythritol 4-phosphate cytidylyltransferase (Clostridium botulinum (strain Eklund 17B / Type B)).